We begin with the raw amino-acid sequence, 418 residues long: Sprouty-related, EVH1 domain-containing protein 2 (418 aa).

Positions 5-122 (THPDDDSYIV…RGVRKAIEDL (118 aa)) constitute a WH1 domain. Residues 127–172 (TTSSSTIHNEAELGDDDVFTTATDSSSNSSQKREQPTRTVSSPTSC) are disordered. A compositionally biased stretch (polar residues) spans 146-156 (TTATDSSSNSS). The KBD domain occupies 201–257 (PYRQVSFPDDDEEIVRINPREKIWMTGYEDYRHAPVRGKYPDPSEDVDSSYVRFAKG). S206 is modified (phosphoserine). Y228 and Y231 each carry phosphotyrosine. Positions 275–302 (GLGEDPKGRGGSVIKTQPSRGKSRRRKE) are disordered. In terms of domain architecture, SPR spans 308-416 (RCVYCRDMFN…CRCCGGKHKA (109 aa)).

As to quaternary structure, homodimer and heterodimer. Able to interact with SPRED1 to form heterodimers. Interacts with RAS. May interact with ZDHHC13 (via ANK repeats) and ZDHHC17 (via ANK repeats). Interacts with TESK1. Interacts with NF1. Post-translationally, phosphorylated on serine and threonine residues. Phosphorylated on tyrosine. Phosphorylation of Tyr-228 and Tyr-231 are required for ubiquitination. In terms of processing, ubiquitinated; leading to degradation by the proteasome.

It is found in the cell membrane. The protein localises to the cytoplasmic vesicle. The protein resides in the secretory vesicle membrane. Its subcellular location is the cytoplasm. Functionally, negatively regulates Ras signaling pathways and downstream activation of MAP kinases. Recruits and translocates NF1 to the cell membrane, thereby enabling NF1-dependent hydrolysis of active GTP-bound Ras to inactive GDP-bound Ras. Inhibits fibroblast growth factor (FGF)-induced retinal lens fiber differentiation, probably by inhibiting FGF-mediated phosphorylation of ERK1/2. Inhibits TGFB-induced epithelial-to-mesenchymal transition in lens epithelial cells. The chain is Sprouty-related, EVH1 domain-containing protein 2 (SPRED2) from Pongo abelii (Sumatran orangutan).